A 468-amino-acid chain; its full sequence is Probable serine/threonine-protein phosphatase 2A activator 2 (468 aa).

The span at 412 to 424 (STTTNNNNNNITS) shows a compositional bias: low complexity. The interval 412 to 468 (STTTNNNNNNITSGDHCNDNEQQCSETHNHDHNHNHNHNHNHPPPPPQQQRSYFPLD) is disordered.

Belongs to the PTPA-type PPIase family.

It localises to the cytoplasm. The enzyme catalyses [protein]-peptidylproline (omega=180) = [protein]-peptidylproline (omega=0). PPIases accelerate the folding of proteins. It catalyzes the cis-trans isomerization of proline imidic peptide bonds in oligopeptides. Acts as a regulatory subunit for PP2A-like phosphatases modulating their activity or substrate specificity, probably by inducing a conformational change in the catalytic subunit, a direct target of the PPIase. This Dictyostelium discoideum (Social amoeba) protein is Probable serine/threonine-protein phosphatase 2A activator 2 (ppp2r4B).